The sequence spans 433 residues: Homoserine O-acetyltransferase (433 aa).

The region spanning 41 to 385 is the AB hydrolase-1 domain; that stretch reads NVVLVCHALT…HGHDAFLVEP (345 aa). Residues 55-74 are disordered; the sequence is VARSPAPERNEGTRGAGQAG. The Nucleophile role is filled by serine 166. Residue arginine 237 coordinates substrate. Active-site residues include aspartate 345 and histidine 378. Aspartate 379 lines the substrate pocket. Residues 403–433 form a disordered region; it reads RAVSDDGGGGGNDSARPERDHAPVHASLFKG.

Belongs to the AB hydrolase superfamily. MetX family. In terms of assembly, homodimer.

Its subcellular location is the cytoplasm. The enzyme catalyses L-homoserine + acetyl-CoA = O-acetyl-L-homoserine + CoA. The protein operates within amino-acid biosynthesis; L-methionine biosynthesis via de novo pathway; O-acetyl-L-homoserine from L-homoserine: step 1/1. Its function is as follows. Transfers an acetyl group from acetyl-CoA to L-homoserine, forming acetyl-L-homoserine. This Halorubrum lacusprofundi (strain ATCC 49239 / DSM 5036 / JCM 8891 / ACAM 34) protein is Homoserine O-acetyltransferase.